The primary structure comprises 392 residues: tRNA-specific 2-thiouridylase MnmA (392 aa).

ATP-binding positions include 18 to 25 and Leu-44; that span reads AMSGGVDS. Cys-112 (nucleophile) is an active-site residue. The cysteines at positions 112 and 208 are disulfide-linked. Gly-136 contacts ATP. The segment at 158 to 160 is interaction with tRNA; sequence RDQ. Cys-208 serves as the catalytic Cysteine persulfide intermediate.

It belongs to the MnmA/TRMU family.

The protein resides in the cytoplasm. The enzyme catalyses S-sulfanyl-L-cysteinyl-[protein] + uridine(34) in tRNA + AH2 + ATP = 2-thiouridine(34) in tRNA + L-cysteinyl-[protein] + A + AMP + diphosphate + H(+). Its function is as follows. Catalyzes the 2-thiolation of uridine at the wobble position (U34) of tRNA, leading to the formation of s(2)U34. The protein is tRNA-specific 2-thiouridylase MnmA of Rhodospirillum centenum (strain ATCC 51521 / SW).